Consider the following 143-residue polypeptide: uncharacterized protein (143 aa).

The HTH marR-type domain maps to 5 to 137 (DARLASDLSL…LRNAADLILE (133 aa)). The H-T-H motif DNA-binding region spans 51 to 74 (PGALAIRERVRPPSMTRVIASLAD).

As to quaternary structure, homodimer.

This is an uncharacterized protein from Mycobacterium leprae (strain TN).